The chain runs to 1441 residues: ABC transporter G family member 41 (1441 aa).

Basic and acidic residues predominate over residues 1–14 (MEDKKQQQQQQREE). The segment at 1–28 (MEDKKQQQQQQREEAEAEEEAPVVPSSL) is disordered. In terms of domain architecture, ABC transporter 1 spans 159–432 (ATARGLSRRP…FESCGFKCPE (274 aa)). 192-199 (GPPGCGKT) lines the ATP pocket. Residues 510-722 (DLLKACFARE…AEIGLTGNEF (213 aa)) enclose the ABC transmembrane type-2 1 domain. Transmembrane regions (helical) follow at residues 528-548 (FIYI…GTVF), 566-586 (SLFY…AIAV), 600-620 (FYPA…LSLV), 642-662 (FFCQ…LFRC), 672-692 (ASSV…GFII), and 758-778 (ASAL…GLTI). One can recognise an ABC transporter 2 domain in the interval 838–1090 (ISFQDVNYYV…NVIHYFETIP (253 aa)). 883 to 890 (GVTGAGKT) is an ATP binding site. One can recognise an ABC transmembrane type-2 2 domain in the interval 1163–1379 (EQLKACIWKQ…TLNVFFTTQF (217 aa)). A run of 7 helical transmembrane segments spans residues 1187–1207 (ILFI…QGDI), 1215–1235 (GLFT…INNC), 1272–1292 (IPYV…MIGY), 1300–1320 (FWFM…GMMI), 1329–1349 (VASI…GFIV), 1357–1377 (WWIW…FFTT), and 1413–1433 (LAAI…GLSI).

This sequence belongs to the ABC transporter superfamily. ABCG family. PDR (TC 3.A.1.205) subfamily.

The protein resides in the membrane. Its function is as follows. May be a general defense protein. This Oryza sativa subsp. japonica (Rice) protein is ABC transporter G family member 41.